The chain runs to 626 residues: Chaperone protein HtpG (626 aa).

Residues 1-339 (MSTNQETRGF…SNDLPLNVSR (339 aa)) form an a; substrate-binding region. The b stretch occupies residues 340-555 (EILQDNKVTA…NDQMTTQMAK (216 aa)). Residues 556-626 (LFAAAGQPVP…FIKRVNSLLS (71 aa)) form a c region.

This sequence belongs to the heat shock protein 90 family. In terms of assembly, homodimer.

Its subcellular location is the cytoplasm. Functionally, molecular chaperone. Has ATPase activity. This is Chaperone protein HtpG from Histophilus somni (strain 129Pt) (Haemophilus somnus).